Here is a 208-residue protein sequence, read N- to C-terminus: Cysteine-rich protein 2 (208 aa).

One can recognise an LIM zinc-binding 1 domain in the interval 5–57 (CPKCDKTVYFAEKVSSLGKDWHKFCLKCERCSKTLTPGGHAEHDGKPFCHKPC). Position 23 is an N6-acetyllysine (lysine 23). Residues 98 to 119 (AEERKASGPPKGPSRASSVTTF) are disordered. Serine 104 carries the post-translational modification Phosphoserine. The region spanning 126 to 178 (CPRCSKKVYFAEKVTSLGKDWHRPCLRCERCGKTLTPGGHAEHDGQPYCHKPC) is the LIM zinc-binding 2 domain. N6-acetyllysine occurs at positions 138 and 144.

As to quaternary structure, interacts with TGFB1I1. As to expression, widespread tissue expression; highest levels in the heart.

This Homo sapiens (Human) protein is Cysteine-rich protein 2 (CRIP2).